Here is a 365-residue protein sequence, read N- to C-terminus: Alanine racemase (365 aa).

Lys35 serves as the catalytic Proton acceptor; specific for D-alanine. Lys35 carries the post-translational modification N6-(pyridoxal phosphate)lysine. Arg130 contributes to the substrate binding site. Tyr256 (proton acceptor; specific for L-alanine) is an active-site residue. Position 304 (Met304) interacts with substrate.

Belongs to the alanine racemase family. The cofactor is pyridoxal 5'-phosphate.

The catalysed reaction is L-alanine = D-alanine. It functions in the pathway amino-acid biosynthesis; D-alanine biosynthesis; D-alanine from L-alanine: step 1/1. In terms of biological role, catalyzes the interconversion of L-alanine and D-alanine. May also act on other amino acids. The chain is Alanine racemase (alr) from Acidovorax sp. (strain JS42).